A 636-amino-acid chain; its full sequence is Threonine--tRNA ligase (636 aa).

The 61-residue stretch at 1-61 folds into the TGS domain; that stretch reads MINITLPDDS…RNDCAVRLIT (61 aa). Residues 238–528 form a catalytic region; sequence DHRKIGTRMG…LVEHFAGKFP (291 aa). Zn(2+) is bound by residues C329, H380, and H505.

The protein belongs to the class-II aminoacyl-tRNA synthetase family. In terms of assembly, homodimer. The cofactor is Zn(2+).

The protein localises to the cytoplasm. It catalyses the reaction tRNA(Thr) + L-threonine + ATP = L-threonyl-tRNA(Thr) + AMP + diphosphate + H(+). Its function is as follows. Catalyzes the attachment of threonine to tRNA(Thr) in a two-step reaction: L-threonine is first activated by ATP to form Thr-AMP and then transferred to the acceptor end of tRNA(Thr). Also edits incorrectly charged L-seryl-tRNA(Thr). The chain is Threonine--tRNA ligase from Desulforapulum autotrophicum (strain ATCC 43914 / DSM 3382 / VKM B-1955 / HRM2) (Desulfobacterium autotrophicum).